The following is a 270-amino-acid chain: uncharacterized protein (270 aa).

The 233-residue stretch at leucine 34–aspartate 266 folds into the ABC transporter domain. An ATP-binding site is contributed by glycine 66–threonine 73.

It belongs to the ABC transporter superfamily.

This is an uncharacterized protein from Rhizobium meliloti (strain 1021) (Ensifer meliloti).